Reading from the N-terminus, the 102-residue chain is MGAIPLEHGLAVAGILFCLGLVGLMVRRNILFVLMSLEVMMNASALAFIVAGARWVQPDGQVMFILVISLAAAEASIGLAILLQLYRRFHTLDIDAASEMRG.

3 consecutive transmembrane segments (helical) span residues 6 to 26 (LEHGLAVAGILFCLGLVGLMV), 30 to 50 (ILFVLMSLEVMMNASALAFIV), and 62 to 82 (VMFILVISLAAAEASIGLAIL).

It belongs to the complex I subunit 4L family. In terms of assembly, NDH-1 is composed of 13 different subunits. Subunits NuoA, H, J, K, L, M, N constitute the membrane sector of the complex.

It localises to the cell inner membrane. The catalysed reaction is a quinone + NADH + 5 H(+)(in) = a quinol + NAD(+) + 4 H(+)(out). NDH-1 shuttles electrons from NADH, via FMN and iron-sulfur (Fe-S) centers, to quinones in the respiratory chain. The immediate electron acceptor for the enzyme in this species is believed to be ubiquinone. Couples the redox reaction to proton translocation (for every two electrons transferred, four hydrogen ions are translocated across the cytoplasmic membrane), and thus conserves the redox energy in a proton gradient. The protein is NADH-quinone oxidoreductase subunit K of Pseudomonas putida (strain W619).